We begin with the raw amino-acid sequence, 178 residues long: ATP synthase subunit delta (178 aa).

It belongs to the ATPase delta chain family. As to quaternary structure, F-type ATPases have 2 components, F(1) - the catalytic core - and F(0) - the membrane proton channel. F(1) has five subunits: alpha(3), beta(3), gamma(1), delta(1), epsilon(1). F(0) has three main subunits: a(1), b(2) and c(10-14). The alpha and beta chains form an alternating ring which encloses part of the gamma chain. F(1) is attached to F(0) by a central stalk formed by the gamma and epsilon chains, while a peripheral stalk is formed by the delta and b chains.

Its subcellular location is the cell membrane. In terms of biological role, f(1)F(0) ATP synthase produces ATP from ADP in the presence of a proton or sodium gradient. F-type ATPases consist of two structural domains, F(1) containing the extramembraneous catalytic core and F(0) containing the membrane proton channel, linked together by a central stalk and a peripheral stalk. During catalysis, ATP synthesis in the catalytic domain of F(1) is coupled via a rotary mechanism of the central stalk subunits to proton translocation. This protein is part of the stalk that links CF(0) to CF(1). It either transmits conformational changes from CF(0) to CF(1) or is implicated in proton conduction. The sequence is that of ATP synthase subunit delta from Mycoplasma pneumoniae (strain ATCC 29342 / M129 / Subtype 1) (Mycoplasmoides pneumoniae).